We begin with the raw amino-acid sequence, 120 residues long: Cytochrome c6 (120 aa).

Residues 1-35 (MFKLFNQASRIFFGIALPCLIFLGGIFSLGNTALA) form the signal peptide. Positions 49, 52, 53, and 93 each coordinate heme c.

The protein belongs to the cytochrome c family. PetJ subfamily. In terms of assembly, monomer. In terms of processing, binds 1 heme c group covalently per subunit.

Its subcellular location is the cellular thylakoid lumen. Its function is as follows. Functions as an electron carrier between membrane-bound cytochrome b6-f and photosystem I in oxygenic photosynthesis. The sequence is that of Cytochrome c6 (petJ) from Synechocystis sp. (strain ATCC 27184 / PCC 6803 / Kazusa).